The chain runs to 179 residues: Replication restart protein DnaT (179 aa).

The segment covering 151-168 (SRSSNGGMPQRDINSVSE) has biased composition (polar residues). A disordered region spans residues 151-179 (SRSSNGGMPQRDINSVSEPDNHIPPGFRG).

The protein belongs to the DnaT family. In terms of assembly, homooligomerizes. Interacts with PriB. Component of the replication restart primosome. Primosome assembly occurs via a 'hand-off' mechanism. PriA binds to replication forks, subsequently PriB then DnaT bind; DnaT then displaces ssDNA to generate the helicase loading substrate.

Functionally, involved in the restart of stalled replication forks, which reloads the replicative helicase on sites other than the origin of replication. Can function in multiple replication restart pathways. Displaces ssDNA from a PriB-ssDNA complex. Probably forms a spiral filament on ssDNA. This chain is Replication restart protein DnaT, found in Salmonella arizonae (strain ATCC BAA-731 / CDC346-86 / RSK2980).